Consider the following 189-residue polypeptide: Glycerol-3-phosphate acyltransferase (189 aa).

The next 5 membrane-spanning stretches (helical) occupy residues 1–21, 51–71, 77–97, 111–131, and 151–171; these read MFWLLAIFAYLLGSLSFAILL, LAVLTLLGDLCKGLAPVLIAH, LQQQAWVGLYAVLGHLFPLYF, MLLGLYPPAALLAIAAWALTF, and LLAWQEPEALLPMSVLTLLIV.

This sequence belongs to the PlsY family. Probably interacts with PlsX.

It localises to the cell inner membrane. The enzyme catalyses an acyl phosphate + sn-glycerol 3-phosphate = a 1-acyl-sn-glycero-3-phosphate + phosphate. Its pathway is lipid metabolism; phospholipid metabolism. Its function is as follows. Catalyzes the transfer of an acyl group from acyl-phosphate (acyl-PO(4)) to glycerol-3-phosphate (G3P) to form lysophosphatidic acid (LPA). This enzyme utilizes acyl-phosphate as fatty acyl donor, but not acyl-CoA or acyl-ACP. This chain is Glycerol-3-phosphate acyltransferase, found in Pseudomonas fluorescens (strain ATCC BAA-477 / NRRL B-23932 / Pf-5).